Consider the following 475-residue polypeptide: Glutamate--tRNA ligase 2 (475 aa).

The 'HIGH' region motif lies at 11–21; it reads PSPTGFLHIGG. Basic and acidic residues predominate over residues 116 to 133; sequence AEGRPPRYDGTWRDKDPA. Positions 116–137 are disordered; that stretch reads AEGRPPRYDGTWRDKDPAEAPS. The short motif at 240-244 is the 'KMSKS' region element; sequence KLSKR. Lys-243 contacts ATP.

This sequence belongs to the class-I aminoacyl-tRNA synthetase family. Glutamate--tRNA ligase type 1 subfamily. In terms of assembly, monomer.

It is found in the cytoplasm. It carries out the reaction tRNA(Glu) + L-glutamate + ATP = L-glutamyl-tRNA(Glu) + AMP + diphosphate. Catalyzes the attachment of glutamate to tRNA(Glu) in a two-step reaction: glutamate is first activated by ATP to form Glu-AMP and then transferred to the acceptor end of tRNA(Glu). In Chelativorans sp. (strain BNC1), this protein is Glutamate--tRNA ligase 2.